The sequence spans 309 residues: Porphobilinogen deaminase (309 aa).

At Cys-244 the chain carries S-(dipyrrolylmethanemethyl)cysteine.

This sequence belongs to the HMBS family. Monomer. Dipyrromethane serves as cofactor.

It carries out the reaction 4 porphobilinogen + H2O = hydroxymethylbilane + 4 NH4(+). It functions in the pathway porphyrin-containing compound metabolism; protoporphyrin-IX biosynthesis; coproporphyrinogen-III from 5-aminolevulinate: step 2/4. In terms of biological role, tetrapolymerization of the monopyrrole PBG into the hydroxymethylbilane pre-uroporphyrinogen in several discrete steps. This is Porphobilinogen deaminase from Agrobacterium fabrum (strain C58 / ATCC 33970) (Agrobacterium tumefaciens (strain C58)).